The primary structure comprises 139 residues: Galactoside-binding soluble lectin 13 (139 aa).

Residues 6–138 (VPYKLPVSLS…DISLTSVCVC (133 aa)) form the Galectin domain.

As to quaternary structure, homodimer; disulfide-linked. Detected in adult and fetal spleen, fetal kidney, adult urinary bladder and placenta. Placental expression originates predominantly from the syncytiotrophoblast.

Its subcellular location is the cytoplasm. The protein localises to the nucleus matrix. Binds beta-galactoside and lactose. Strong inducer of T-cell apoptosis. Has hemagglutinating activity towards chicken erythrocytes. The chain is Galactoside-binding soluble lectin 13 (LGALS13) from Homo sapiens (Human).